The sequence spans 44 residues: Mu-conotoxin-like Cal 12.1.1e (44 aa).

Disulfide bonds link Cys-3-Cys-16, Cys-11-Cys-28, Cys-18-Cys-33, and Cys-27-Cys-38. A 6'-bromotryptophan modification is found at Trp-17. The residue at position 23 (Pro-23) is a 4-hydroxyproline. 6'-bromotryptophan is present on residues Trp-36 and Trp-37. The residue at position 39 (Pro-39) is a 4-hydroxyproline. At Trp-43 the chain carries 6'-bromotryptophan.

Expressed by the venom duct.

It localises to the secreted. Mu-conotoxins block voltage-gated sodium channels. This toxin reversibly blocks voltage-gated sodium channel in cephalopods, with no alteration in the voltage dependence of sodium conductance or on the kinetics of inactivation. This chain is Mu-conotoxin-like Cal 12.1.1e, found in Californiconus californicus (California cone).